The primary structure comprises 106 residues: Thioredoxin (106 aa).

One can recognise a Thioredoxin domain in the interval glycine 1–leucine 106. Cysteines 31 and 34 form a disulfide.

Belongs to the thioredoxin family.

Its function is as follows. Participates in various redox reactions through the reversible oxidation of its active center dithiol to a disulfide and catalyzes dithiol-disulfide exchange reactions. In Kitasatospora aureofaciens (Streptomyces aureofaciens), this protein is Thioredoxin (trxA).